The sequence spans 141 residues: Hemoglobin subunit alpha (141 aa).

The 141-residue stretch at 1-141 (VLSAKDKTNI…VSTVLTSKYR (141 aa)) folds into the Globin domain. Ser-3 is subject to Phosphoserine. Lys-7 carries the N6-succinyllysine modification. Thr-8 carries the phosphothreonine modification. Lys-16 is modified (N6-acetyllysine; alternate). Position 16 is an N6-succinyllysine; alternate (Lys-16). Position 24 is a phosphotyrosine (Tyr-24). At Lys-40 the chain carries N6-succinyllysine. Residue Ser-49 is modified to Phosphoserine. His-58 provides a ligand contact to O2. Residue His-87 participates in heme b binding. The residue at position 102 (Ser-102) is a Phosphoserine. Residue Thr-108 is modified to Phosphothreonine. Residues Ser-124 and Ser-131 each carry the phosphoserine modification. Phosphothreonine is present on residues Thr-134 and Thr-137. At Ser-138 the chain carries Phosphoserine.

This sequence belongs to the globin family. As to quaternary structure, heterotetramer of two alpha chains and two beta chains. As to expression, red blood cells.

In terms of biological role, involved in oxygen transport from the lung to the various peripheral tissues. Hemopressin acts as an antagonist peptide of the cannabinoid receptor CNR1. Hemopressin-binding efficiently blocks cannabinoid receptor CNR1 and subsequent signaling. In Mesocricetus auratus (Golden hamster), this protein is Hemoglobin subunit alpha (HBA).